Reading from the N-terminus, the 536-residue chain is Nucleosome assembly protein 1-like 3 (536 aa).

2 disordered regions span residues 1–104 (MAEA…DKLP) and 160–338 (PTEE…KEDP). Positions 35 to 75 (SNSSSSTTSCGSTGSSSSSSSSSSSSSSSSSGSSGSSSNGS) are enriched in low complexity. Over residues 77 to 95 (LHQKKRVPGPSRRAQRRPS) the composition is skewed to basic residues. Positions 160–184 (PTEEECEWNSEEEFSGDEEMQDDTP) are enriched in acidic residues. 2 stretches are compositionally biased toward basic and acidic residues: residues 199–220 (GKEN…PEAK) and 227–269 (PKET…KTDS). Residues 287-300 (TQANAEYTDQPTED) show a composition bias toward polar residues. Residues 306–324 (PVREAQKRVPETRPEERVN) show a composition bias toward basic and acidic residues.

Belongs to the nucleosome assembly protein (NAP) family.

The protein resides in the nucleus. This chain is Nucleosome assembly protein 1-like 3 (Nap1l3), found in Rattus norvegicus (Rat).